Consider the following 491-residue polypeptide: Nickel-binding protein NikA (491 aa).

A signal peptide spans 1–18; sequence MKFKRLATIFSAVLVLSG. Cys19 carries N-palmitoyl cysteine lipidation. Cys19 is lipidated: S-diacylglycerol cysteine.

It belongs to the bacterial solute-binding protein 5 family. The complex is composed of two ATP-binding proteins (NikD and NikE), two transmembrane proteins (NikB and NikC) and a solute-binding protein (NikA).

The protein localises to the cell membrane. Its function is as follows. Part of the ABC transporter complex NikABCDE (Opp2) involved in nickel import. Binds nickel and transfers it to the membrane-bound permease. Required for full urease activity and plays a significant role in the virulence of S.aureus during urinary tract infection (UTI). May bind nickel via a nickel-chelator. This is Nickel-binding protein NikA from Staphylococcus aureus (strain NCTC 8325 / PS 47).